An 859-amino-acid polypeptide reads, in one-letter code: Cadherin-related family member 1 (859 aa).

An N-terminal signal peptide occupies residues 1–21; the sequence is MRRGPRVALVLGLLRIYLAQA. Topologically, residues 22–701 are extracellular; sequence NFAPHFFDNG…LIQTKDNPMK (680 aa). Cadherin domains are found at residues 36 to 135, 136 to 247, 248 to 354, 360 to 473, 474 to 577, and 569 to 691; these read NGNM…APRF, IQEP…APIF, VGTP…PPTF, PQNK…VPKF, TSHY…YPQF, and DVND…MAAF. Residues Asn-58 and Asn-89 are each glycosylated (N-linked (GlcNAc...) asparagine). Asn-288 is a glycosylation site (N-linked (GlcNAc...) asparagine). A helical membrane pass occupies residues 702–722; it reads AVGVLAGVMAIVVAITVLIST. Topologically, residues 723–859 are cytoplasmic; sequence ATFWRNKKSN…KKSLDNKAYI (137 aa). Residues 793 to 838 form a disordered region; sequence PALPPPPKMASSMVAQQTVPTVSGSLTPQPSPQLPTPKTLGGPVQS. The span at 805–816 shows a compositional bias: polar residues; that stretch reads MVAQQTVPTVSG.

In terms of assembly, interacts with PROM1. Post-translationally, undergoes proteolytic cleavage; produces a soluble 95 kDa N-terminal fragment and a 25 kDa cell-associated C-terminal fragment. In terms of tissue distribution, expressed in cone and rod photoreceptor cells (at protein level). Expressed in photoreceptor cells of the outer nuclear layer of the retina. Expressed in mitral and tufted cells in the olfactory bulb.

Its subcellular location is the cell membrane. In terms of biological role, potential calcium-dependent cell-adhesion protein. May be required for the structural integrity of the outer segment (OS) of photoreceptor cells. This is Cadherin-related family member 1 (Cdhr1) from Mus musculus (Mouse).